We begin with the raw amino-acid sequence, 184 residues long: Peptide deformylase 2 (184 aa).

Residues Cys-110 and His-153 each contribute to the Fe cation site. Glu-154 is an active-site residue. Position 157 (His-157) interacts with Fe cation.

Belongs to the polypeptide deformylase family. The cofactor is Fe(2+).

It carries out the reaction N-terminal N-formyl-L-methionyl-[peptide] + H2O = N-terminal L-methionyl-[peptide] + formate. Its function is as follows. Removes the formyl group from the N-terminal Met of newly synthesized proteins. Requires at least a dipeptide for an efficient rate of reaction. N-terminal L-methionine is a prerequisite for activity but the enzyme has broad specificity at other positions. This is Peptide deformylase 2 from Bacillus anthracis.